We begin with the raw amino-acid sequence, 700 residues long: AP-2 complex subunit beta (700 aa).

The disordered stretch occupies residues 625 to 700; that stretch reads VGNSFPPTGA…RKLSMKRPFS (76 aa). Ser-649 carries the phosphoserine modification. Thr-652 carries the post-translational modification Phosphothreonine. Residues 653–663 show a composition bias toward basic and acidic residues; that stretch reads AMMDDYDKPAE. Ser-683 is modified (phosphoserine).

The protein belongs to the adaptor complexes large subunit family. In terms of assembly, adaptor protein complex 2 (AP-2) is a heterotetramer composed of two large adaptins (alpha-type subunit APL3 and beta-type subunit APL1), a medium chain (mu-type subunit APM4) and a small adaptin (sigma-type subunit APS2). Interacts with APS2.

Its subcellular location is the cell membrane. The protein resides in the membrane. It localises to the coated pit. In terms of biological role, adaptins are components of the adaptor complexes which link clathrin to receptors in coated vesicles. Clathrin-associated protein complexes are believed to interact with the cytoplasmic tails of membrane proteins, leading to their selection and concentration. Beta adaptin is a subunit of the plasma membrane adaptor. This is AP-2 complex subunit beta (APL1) from Saccharomyces cerevisiae (strain ATCC 204508 / S288c) (Baker's yeast).